Consider the following 240-residue polypeptide: Pyridoxine 5'-phosphate synthase (240 aa).

Asn7 provides a ligand contact to 3-amino-2-oxopropyl phosphate. 9 to 10 is a 1-deoxy-D-xylulose 5-phosphate binding site; the sequence is DH. Arg18 serves as a coordination point for 3-amino-2-oxopropyl phosphate. Residue His43 is the Proton acceptor of the active site. Arg45 and His50 together coordinate 1-deoxy-D-xylulose 5-phosphate. Residue Glu70 is the Proton acceptor of the active site. Thr100 lines the 1-deoxy-D-xylulose 5-phosphate pocket. His191 acts as the Proton donor in catalysis. 3-amino-2-oxopropyl phosphate contacts are provided by residues Gly192 and 213-214; that span reads GH.

The protein belongs to the PNP synthase family. Homooctamer; tetramer of dimers.

It localises to the cytoplasm. The enzyme catalyses 3-amino-2-oxopropyl phosphate + 1-deoxy-D-xylulose 5-phosphate = pyridoxine 5'-phosphate + phosphate + 2 H2O + H(+). Its pathway is cofactor biosynthesis; pyridoxine 5'-phosphate biosynthesis; pyridoxine 5'-phosphate from D-erythrose 4-phosphate: step 5/5. Catalyzes the complicated ring closure reaction between the two acyclic compounds 1-deoxy-D-xylulose-5-phosphate (DXP) and 3-amino-2-oxopropyl phosphate (1-amino-acetone-3-phosphate or AAP) to form pyridoxine 5'-phosphate (PNP) and inorganic phosphate. This Acaryochloris marina (strain MBIC 11017) protein is Pyridoxine 5'-phosphate synthase.